The following is a 242-amino-acid chain: Methylthioribulose-1-phosphate dehydratase (242 aa).

The tract at residues 1–22 is disordered; sequence MAAASGHGLELANGGDATQDKL. Cys97 is a substrate binding site. Positions 115 and 117 each coordinate Zn(2+). The Proton donor/acceptor role is filled by Glu139. His195 serves as a coordination point for Zn(2+).

The protein belongs to the aldolase class II family. MtnB subfamily. The cofactor is Zn(2+).

It is found in the cytoplasm. It catalyses the reaction 5-(methylsulfanyl)-D-ribulose 1-phosphate = 5-methylsulfanyl-2,3-dioxopentyl phosphate + H2O. It functions in the pathway amino-acid biosynthesis; L-methionine biosynthesis via salvage pathway; L-methionine from S-methyl-5-thio-alpha-D-ribose 1-phosphate: step 2/6. Functionally, catalyzes the dehydration of methylthioribulose-1-phosphate (MTRu-1-P) into 2,3-diketo-5-methylthiopentyl-1-phosphate (DK-MTP-1-P). Functions in the methionine salvage pathway. May play a role in apoptosis. This chain is Methylthioribulose-1-phosphate dehydratase, found in Gallus gallus (Chicken).